The following is a 328-amino-acid chain: GMP reductase (328 aa).

The active-site Thioimidate intermediate is the C176. 205–228 (IIADGGIRTHGDIAKSIRFGASMI) contributes to the NADP(+) binding site.

The protein belongs to the IMPDH/GMPR family. GuaC type 2 subfamily.

It catalyses the reaction IMP + NH4(+) + NADP(+) = GMP + NADPH + 2 H(+). Catalyzes the irreversible NADPH-dependent deamination of GMP to IMP. It functions in the conversion of nucleobase, nucleoside and nucleotide derivatives of G to A nucleotides, and in maintaining the intracellular balance of A and G nucleotides. This is GMP reductase from Streptococcus pneumoniae serotype 2 (strain D39 / NCTC 7466).